Reading from the N-terminus, the 203-residue chain is Small ribosomal subunit protein uS4 (203 aa).

Positions 93-156 constitute an S4 RNA-binding domain; it reads RRLDNVVYRL…IKVPAILEAV (64 aa).

This sequence belongs to the universal ribosomal protein uS4 family. In terms of assembly, part of the 30S ribosomal subunit. Contacts protein S5. The interaction surface between S4 and S5 is involved in control of translational fidelity.

Functionally, one of the primary rRNA binding proteins, it binds directly to 16S rRNA where it nucleates assembly of the body of the 30S subunit. Its function is as follows. With S5 and S12 plays an important role in translational accuracy. In Streptococcus suis (strain 98HAH33), this protein is Small ribosomal subunit protein uS4.